We begin with the raw amino-acid sequence, 329 residues long: DNA-directed RNA polymerase subunit alpha (329 aa).

Positions 1 to 235 are alpha N-terminal domain (alpha-NTD); the sequence is MLGSVTDFLK…EQLEAFVDLR (235 aa). The tract at residues 249 to 329 is alpha C-terminal domain (alpha-CTD); it reads FDPILLRPVD…NWPPASIADE (81 aa).

It belongs to the RNA polymerase alpha chain family. As to quaternary structure, homodimer. The RNAP catalytic core consists of 2 alpha, 1 beta, 1 beta' and 1 omega subunit. When a sigma factor is associated with the core the holoenzyme is formed, which can initiate transcription.

The enzyme catalyses RNA(n) + a ribonucleoside 5'-triphosphate = RNA(n+1) + diphosphate. Functionally, DNA-dependent RNA polymerase catalyzes the transcription of DNA into RNA using the four ribonucleoside triphosphates as substrates. This Aeromonas hydrophila subsp. hydrophila (strain ATCC 7966 / DSM 30187 / BCRC 13018 / CCUG 14551 / JCM 1027 / KCTC 2358 / NCIMB 9240 / NCTC 8049) protein is DNA-directed RNA polymerase subunit alpha.